The sequence spans 872 residues: Metabotropic glutamate receptor 2 (872 aa).

The signal sequence occupies residues Met-1–Ala-18. At Glu-19–Ala-568 the chain is on the extracellular side. Cys-50 and Cys-92 are disulfide-bonded. The L-glutamate site is built by Arg-57, Arg-61, Ser-145, Ala-166, and Thr-168. N-linked (GlcNAc...) asparagine glycans are attached at residues Asn-203 and Asn-286. 7 cysteine pairs are disulfide-bonded: Cys-234–Cys-518, Cys-355–Cys-362, Cys-400–Cys-407, Cys-500–Cys-519, Cys-504–Cys-522, Cys-525–Cys-537, and Cys-540–Cys-553. Residue Asp-295 coordinates L-glutamate. The N-linked (GlcNAc...) asparagine glycan is linked to Asn-338. An L-glutamate-binding site is contributed by Lys-377. N-linked (GlcNAc...) asparagine glycosylation is present at Asn-402. N-linked (GlcNAc...) asparagine glycosylation is present at Asn-547. The helical transmembrane segment at Val-569–Phe-589 threads the bilayer. The Cytoplasmic segment spans residues Val-590–Glu-604. The chain crosses the membrane as a helical span at residues Leu-605–Ala-625. The Extracellular segment spans residues Lys-626–Thr-633. A disulfide bond links Cys-632 and Cys-721. The helical transmembrane segment at Leu-634–Leu-651 threads the bilayer. At Thr-652–Gln-679 the chain is on the cytoplasmic side. An important for interaction with HTR2A region spans residues Ala-677 to Ala-685. A helical transmembrane segment spans residues Val-680–Val-700. Residues Glu-701–Ala-726 are Extracellular-facing. Residues Ser-727–Phe-747 traverse the membrane as a helical segment. Residues Lys-748–Lys-760 lie on the Cytoplasmic side of the membrane. Residues Phe-761 to Tyr-781 traverse the membrane as a helical segment. The Extracellular portion of the chain corresponds to Val-782–Val-798. Residues Ser-799–Phe-819 traverse the membrane as a helical segment. Over Gln-820–Leu-872 the chain is Cytoplasmic.

Belongs to the G-protein coupled receptor 3 family. As to quaternary structure, forms heterodimers with GRM3 or GRM4. Interacts with GNAI1. Interacts with TAMALIN. Interacts with HTR2A. As to expression, detected in neurons in brain cortex (at protein level).

It is found in the cell membrane. Its subcellular location is the synapse. It localises to the cell projection. The protein localises to the dendrite. Functionally, dimeric G protein-coupled receptor which is activated by the excitatory neurotransmitter L-glutamate. Plays critical roles in modulating synaptic transmission and neuronal excitability. Upon activation by glutamate, inhibits presynaptic calcium channels, reducing further glutamate release and dampening excitatory signaling. Mechanistically, ligand binding causes a conformation change that triggers signaling via guanine nucleotide-binding proteins (G proteins) and modulates the activity of down-stream effectors, such as adenylate cyclase. May mediate suppression of neurotransmission or may be involved in synaptogenesis or synaptic stabilization. This Mus musculus (Mouse) protein is Metabotropic glutamate receptor 2 (Grm2).